The following is a 470-amino-acid chain: L-seryl-tRNA(Sec) selenium transferase (470 aa).

Lys294 carries the post-translational modification N6-(pyridoxal phosphate)lysine.

It belongs to the SelA family. The cofactor is pyridoxal 5'-phosphate.

The protein localises to the cytoplasm. It catalyses the reaction L-seryl-tRNA(Sec) + selenophosphate + H(+) = L-selenocysteinyl-tRNA(Sec) + phosphate. The protein operates within aminoacyl-tRNA biosynthesis; selenocysteinyl-tRNA(Sec) biosynthesis; selenocysteinyl-tRNA(Sec) from L-seryl-tRNA(Sec) (bacterial route): step 1/1. Functionally, converts seryl-tRNA(Sec) to selenocysteinyl-tRNA(Sec) required for selenoprotein biosynthesis. The polypeptide is L-seryl-tRNA(Sec) selenium transferase (Solidesulfovibrio magneticus (strain ATCC 700980 / DSM 13731 / RS-1) (Desulfovibrio magneticus)).